Consider the following 436-residue polypeptide: GTPase Der (436 aa).

EngA-type G domains lie at 4-167 (PTVA…PTEV) and 175-351 (IRFS…ESQN). GTP contacts are provided by residues 10–17 (GRPNVGKS), 57–61 (DTGGI), 119–122 (NKVD), 181–188 (GRPNVGKS), 229–233 (DTAGM), and 294–297 (NKWD). In terms of domain architecture, KH-like spans 352–436 (RRISSAVLND…PIHLIARKRK (85 aa)).

It belongs to the TRAFAC class TrmE-Era-EngA-EngB-Septin-like GTPase superfamily. EngA (Der) GTPase family. Associates with the 50S ribosomal subunit.

Functionally, GTPase that plays an essential role in the late steps of ribosome biogenesis. In Streptococcus thermophilus (strain ATCC BAA-491 / LMD-9), this protein is GTPase Der.